The following is a 125-amino-acid chain: Oxytocin-neurophysin 1 (125 aa).

Residues Met1–Ala19 form the signal peptide. The cysteines at positions 20 and 25 are disulfide-linked. Gly28 is subject to Glycine amide. 7 disulfides stabilise this stretch: Cys41–Cys85, Cys44–Cys58, Cys52–Cys75, Cys59–Cys65, Cys92–Cys104, Cys98–Cys116, and Cys105–Cys110.

This sequence belongs to the vasopressin/oxytocin family. As to quaternary structure, interacts with oxytocin receptor (Ki=1.5 nM). Interacts with vasopressin V1aR/AVPR1A (Ki=37 nM), V1bR/AVPR1B (Ki=222 nM), and V2R/AVPR2 receptors (Ki=823 nM).

In terms of biological role, neurophysin 1 specifically binds oxytocin. Oxytocin causes contraction of the smooth muscle of the uterus and of the mammary gland. Acts by binding to oxytocin receptor (OXTR). The polypeptide is Oxytocin-neurophysin 1 (Oxt) (Rattus norvegicus (Rat)).